Consider the following 87-residue polypeptide: Large ribosomal subunit protein eL31 (87 aa).

This sequence belongs to the eukaryotic ribosomal protein eL31 family.

This is Large ribosomal subunit protein eL31 (rpl31e) from Methanocaldococcus jannaschii (strain ATCC 43067 / DSM 2661 / JAL-1 / JCM 10045 / NBRC 100440) (Methanococcus jannaschii).